We begin with the raw amino-acid sequence, 181 residues long: Probable nicotinate-nucleotide adenylyltransferase (181 aa).

The protein belongs to the NadD family.

The catalysed reaction is nicotinate beta-D-ribonucleotide + ATP + H(+) = deamido-NAD(+) + diphosphate. It functions in the pathway cofactor biosynthesis; NAD(+) biosynthesis; deamido-NAD(+) from nicotinate D-ribonucleotide: step 1/1. Its function is as follows. Catalyzes the reversible adenylation of nicotinate mononucleotide (NaMN) to nicotinic acid adenine dinucleotide (NaAD). The protein is Probable nicotinate-nucleotide adenylyltransferase of Campylobacter jejuni subsp. jejuni serotype O:6 (strain 81116 / NCTC 11828).